The chain runs to 215 residues: MKQNRKNLPIILASSSPARIELLNRIKIIPSQIIPADIDETPNLRELPAPLAIRLAYEKAIKIASQIEASAIIIAADTVAAVGRRILPKATTYEEVKNCIKMLSGRRHRVYTGLCIIKKENDQLTVRQKIVQTIVKFKKLSDEEINFYCSLDEGIDKAGGCKISGYAEAFISFISGSYSNVMGLPLFETVNALTSLGFRCSSIMPAKMNYCHSAT.

The Proton acceptor role is filled by D77.

Belongs to the Maf family. A divalent metal cation serves as cofactor.

It localises to the cytoplasm. The catalysed reaction is a ribonucleoside 5'-triphosphate + H2O = a ribonucleoside 5'-phosphate + diphosphate + H(+). The enzyme catalyses a 2'-deoxyribonucleoside 5'-triphosphate + H2O = a 2'-deoxyribonucleoside 5'-phosphate + diphosphate + H(+). Nucleoside triphosphate pyrophosphatase. May have a dual role in cell division arrest and in preventing the incorporation of modified nucleotides into cellular nucleic acids. The sequence is that of Nucleoside triphosphate pyrophosphatase from Rickettsia africae (strain ESF-5).